Here is a 238-residue protein sequence, read N- to C-terminus: 4-hydroxy-tetrahydrodipicolinate reductase (238 aa).

12-17 (GASGRM) provides a ligand contact to NAD(+). Arginine 40 lines the NADP(+) pocket. NAD(+)-binding positions include 93–95 (GTT) and 117–120 (ASNF). Histidine 149 serves as the catalytic Proton donor/acceptor. Histidine 150 is a binding site for (S)-2,3,4,5-tetrahydrodipicolinate. The Proton donor role is filled by lysine 153. (S)-2,3,4,5-tetrahydrodipicolinate is bound at residue 159-160 (GT).

This sequence belongs to the DapB family.

It localises to the cytoplasm. It carries out the reaction (S)-2,3,4,5-tetrahydrodipicolinate + NAD(+) + H2O = (2S,4S)-4-hydroxy-2,3,4,5-tetrahydrodipicolinate + NADH + H(+). The enzyme catalyses (S)-2,3,4,5-tetrahydrodipicolinate + NADP(+) + H2O = (2S,4S)-4-hydroxy-2,3,4,5-tetrahydrodipicolinate + NADPH + H(+). It participates in amino-acid biosynthesis; L-lysine biosynthesis via DAP pathway; (S)-tetrahydrodipicolinate from L-aspartate: step 4/4. Functionally, catalyzes the conversion of 4-hydroxy-tetrahydrodipicolinate (HTPA) to tetrahydrodipicolinate. This Xanthomonas campestris pv. campestris (strain 8004) protein is 4-hydroxy-tetrahydrodipicolinate reductase.